The sequence spans 509 residues: ATP synthase subunit alpha (509 aa).

Residue 169–176 (GDRQTGKT) coordinates ATP.

The protein belongs to the ATPase alpha/beta chains family. In terms of assembly, F-type ATPases have 2 components, CF(1) - the catalytic core - and CF(0) - the membrane proton channel. CF(1) has five subunits: alpha(3), beta(3), gamma(1), delta(1), epsilon(1). CF(0) has three main subunits: a(1), b(2) and c(9-12). The alpha and beta chains form an alternating ring which encloses part of the gamma chain. CF(1) is attached to CF(0) by a central stalk formed by the gamma and epsilon chains, while a peripheral stalk is formed by the delta and b chains.

Its subcellular location is the cell inner membrane. It carries out the reaction ATP + H2O + 4 H(+)(in) = ADP + phosphate + 5 H(+)(out). Functionally, produces ATP from ADP in the presence of a proton gradient across the membrane. The alpha chain is a regulatory subunit. The sequence is that of ATP synthase subunit alpha from Brucella abortus (strain S19).